The primary structure comprises 86 residues: ATP synthase subunit c (86 aa).

Helical transmembrane passes span 8–28 and 64–84; these read VLGC…GPGI and TTGL…PLLG.

It belongs to the ATPase C chain family. In terms of assembly, F-type ATPases have 2 components, F(1) - the catalytic core - and F(0) - the membrane proton channel. F(1) has five subunits: alpha(3), beta(3), gamma(1), delta(1), epsilon(1). F(0) has three main subunits: a(1), b(2) and c(10-14). The alpha and beta chains form an alternating ring which encloses part of the gamma chain. F(1) is attached to F(0) by a central stalk formed by the gamma and epsilon chains, while a peripheral stalk is formed by the delta and b chains.

The protein localises to the cell membrane. Functionally, f(1)F(0) ATP synthase produces ATP from ADP in the presence of a proton or sodium gradient. F-type ATPases consist of two structural domains, F(1) containing the extramembraneous catalytic core and F(0) containing the membrane proton channel, linked together by a central stalk and a peripheral stalk. During catalysis, ATP synthesis in the catalytic domain of F(1) is coupled via a rotary mechanism of the central stalk subunits to proton translocation. Key component of the F(0) channel; it plays a direct role in translocation across the membrane. A homomeric c-ring of between 10-14 subunits forms the central stalk rotor element with the F(1) delta and epsilon subunits. This chain is ATP synthase subunit c, found in Lachnoclostridium phytofermentans (strain ATCC 700394 / DSM 18823 / ISDg) (Clostridium phytofermentans).